A 439-amino-acid chain; its full sequence is Xylose isomerase (439 aa).

Residues H101 and D104 contribute to the active site. Mg(2+)-binding residues include E232, E268, H271, D296, D307, D309, and D339.

The protein belongs to the xylose isomerase family. As to quaternary structure, homotetramer. The cofactor is Mg(2+).

It is found in the cytoplasm. It carries out the reaction alpha-D-xylose = alpha-D-xylulofuranose. The polypeptide is Xylose isomerase (Photorhabdus laumondii subsp. laumondii (strain DSM 15139 / CIP 105565 / TT01) (Photorhabdus luminescens subsp. laumondii)).